A 90-amino-acid polypeptide reads, in one-letter code: Large ribosomal subunit protein bL27 (90 aa).

The protein belongs to the bacterial ribosomal protein bL27 family.

The protein is Large ribosomal subunit protein bL27 of Paracoccus denitrificans (strain Pd 1222).